A 286-amino-acid chain; its full sequence is Aquaporin PIP1-1 (286 aa).

At Met-1 the chain carries N-acetylmethionine. The interval 1 to 34 (MEGKEEDVRVGANKFPERQPIGTSAQSDKDYKEP) is disordered. The Cytoplasmic portion of the chain corresponds to 1-54 (MEGKEEDVRVGANKFPERQPIGTSAQSDKDYKEPPPAPFFEPGELSSWSFWRAG). A helical transmembrane segment spans residues 55-75 (IAEFIATFLFLYITVLTVMGV). The Extracellular segment spans residues 76 to 91 (KRSPNMCASVGIQGIA). The chain crosses the membrane as a helical span at residues 92-112 (WAFGGMIFALVYCTAGISGGH). Residues 113–132 (INPAVTFGLFLARKLSLTRA) lie on the Cytoplasmic side of the membrane. The NPA 1 motif lies at 114-116 (NPA). Residues 133–153 (LYYIVMQCLGAICGAGVVKGF) form a helical membrane-spanning segment. The Extracellular segment spans residues 154 to 174 (QPKQYQALGGGANTVAHGYTK). Residues 175-195 (GSGLGAEIIGTFVLVYTVFSA) traverse the membrane as a helical segment. The Cytoplasmic segment spans residues 196 to 208 (TDAKRNARDSHVP). Residues 209–229 (ILAPLPIGFAVFLVHLATIPI) traverse the membrane as a helical segment. Over 230–256 (TGTGINPARSLGAAIIYNKDHSWDDHW) the chain is Extracellular. The NPA 2 signature appears at 235-237 (NPA). Residues 257–277 (VFWVGPFIGAALAALYHVVVI) form a helical membrane-spanning segment. Over 278–286 (RAIPFKSRS) the chain is Cytoplasmic. At Ser-284 the chain carries Phosphoserine.

Belongs to the MIP/aquaporin (TC 1.A.8) family. PIP (TC 1.A.8.11) subfamily. In terms of tissue distribution, widely expressed. Expressed in roots, above ground and in flower buds.

Its subcellular location is the cell membrane. In terms of biological role, water channel required to facilitate the transport of water across cell membrane. Its function is impaired by Hg(2+). This is Aquaporin PIP1-1 (PIP1-1) from Arabidopsis thaliana (Mouse-ear cress).